Reading from the N-terminus, the 600-residue chain is Sulfite reductase [NADPH] flavoprotein alpha-component (600 aa).

One can recognise a Flavodoxin-like domain in the interval 63 to 201 (ITLISASQTG…VADQWRKQLT (139 aa)). FMN contacts are provided by residues 69–74 (SQTGNA), 116–119 (STQG), and 152–161 (LGDTSYERFC). In terms of domain architecture, FAD-binding FR-type spans 235–449 (QAPLTAALAT…IEHNDNFRLP (215 aa)). FAD is bound by residues Thr-323, His-357, 387–390 (RLYS), 405–407 (TVG), Tyr-411, and 420–423 (GGAS). NADP(+) is bound by residues 520–521 (SR), 526–530 (KIYVQ), and Asp-562. Residue Tyr-600 participates in FAD binding.

Belongs to the NADPH-dependent sulphite reductase flavoprotein subunit CysJ family. It in the N-terminal section; belongs to the flavodoxin family. The protein in the C-terminal section; belongs to the flavoprotein pyridine nucleotide cytochrome reductase family. As to quaternary structure, alpha(8)-beta(8). The alpha component is a flavoprotein, the beta component is a hemoprotein. FAD is required as a cofactor. It depends on FMN as a cofactor.

It catalyses the reaction hydrogen sulfide + 3 NADP(+) + 3 H2O = sulfite + 3 NADPH + 4 H(+). It participates in sulfur metabolism; hydrogen sulfide biosynthesis; hydrogen sulfide from sulfite (NADPH route): step 1/1. Component of the sulfite reductase complex that catalyzes the 6-electron reduction of sulfite to sulfide. This is one of several activities required for the biosynthesis of L-cysteine from sulfate. The flavoprotein component catalyzes the electron flow from NADPH -&gt; FAD -&gt; FMN to the hemoprotein component. The chain is Sulfite reductase [NADPH] flavoprotein alpha-component from Photorhabdus laumondii subsp. laumondii (strain DSM 15139 / CIP 105565 / TT01) (Photorhabdus luminescens subsp. laumondii).